An 822-amino-acid chain; its full sequence is Putative ESX-1 scaffolding and assembly protein SaeB (822 aa).

May be involved in assembly of the ESX-1 / type VII specialized secretion system (T7SS), which exports several proteins including EsxA and EsxB. Involved in DNA conjugation in recipient (MDK8) but not donor (mc(2)155) strain. In Mycolicibacterium smegmatis (strain ATCC 700084 / mc(2)155) (Mycobacterium smegmatis), this protein is Putative ESX-1 scaffolding and assembly protein SaeB.